A 432-amino-acid polypeptide reads, in one-letter code: Keratin, type I cytoskeletal 17 (432 aa).

The disordered stretch occupies residues 1–24; that stretch reads MTTTIRQFTSSSSIKGSSGLGGGS. A head region spans residues 1–83; sequence MTTTIRQFTS…GGVDGLLAGG (83 aa). Serine 12 and serine 13 each carry phosphoserine. A Glycyl lysine isopeptide (Lys-Gly) (interchain with G-Cter in SUMO1); alternate cross-link involves residue lysine 15. Lysine 15 participates in a covalent cross-link: Glycyl lysine isopeptide (Lys-Gly) (interchain with G-Cter in SUMO2); alternate. Phosphoserine is present on residues serine 25, serine 32, and serine 39. Position 44 is a phosphoserine; by RPS6KA1 (serine 44). The interval 84–120 is coil 1A; it reads EKATMQNLNDRLASYLDKVRALEEANTELEVKIRDWY. Residues 84-395 enclose the IF rod domain; that stretch reads EKATMQNLND…RLLEGEDAHL (312 aa). Threonine 110 is modified (phosphothreonine). Residues 121–138 are linker 1; that stretch reads QRQAPGPARDYSQYYRTI. Residues 139-230 are coil 1B; sequence EELQNKILTA…NHEEEMNALR (92 aa). A linker 12 region spans residues 231-250; that stretch reads GQVGGEINVEMDAAPGVDLS. The interval 251–392 is coil 2; it reads RILNEMRDQY…TYRRLLEGED (142 aa). Residue lysine 278 forms a Glycyl lysine isopeptide (Lys-Gly) (interchain with G-Cter in SUMO2) linkage. Threonine 279 bears the Phosphothreonine mark. Serine 323 bears the Phosphoserine mark. Residues 393–432 are tail; that stretch reads AHLTQYKKEPVTTRQVRTIVEEVQDGKVISSREQVHQTTR. Glycyl lysine isopeptide (Lys-Gly) (interchain with G-Cter in SUMO1); alternate cross-links involve residues lysine 399, lysine 400, and lysine 419. Glycyl lysine isopeptide (Lys-Gly) (interchain with G-Cter in SUMO2); alternate cross-links involve residues lysine 399, lysine 400, and lysine 419.

It belongs to the intermediate filament family. In terms of assembly, heterodimer of a type I and a type II keratin. KRT17 associates with KRT6 isomers (KRT6A or KRT6B). Interacts with TRADD and SFN. Phosphorylation at Ser-44 occurs in a growth- and stress-dependent fashion in skin keratinocytes, it has no effect on filament organization.

The protein localises to the cytoplasm. Its function is as follows. Type I keratin involved in the formation and maintenance of various skin appendages, specifically in determining shape and orientation of hair. Required for the correct growth of hair follicles, in particular for the persistence of the anagen (growth) state. Modulates the function of TNF-alpha in the specific context of hair cycling. Regulates protein synthesis and epithelial cell growth through binding to the adapter protein SFN and by stimulating Akt/mTOR pathway. Involved in tissue repair. May be a marker of basal cell differentiation in complex epithelia and therefore indicative of a certain type of epithelial 'stem cells'. Acts as a promoter of epithelial proliferation by acting a regulator of immune response in skin: promotes Th1/Th17-dominated immune environment contributing to the development of basaloid skin tumors. May act as an autoantigen in the immunopathogenesis of psoriasis, with certain peptide regions being a major target for autoreactive T-cells and hence causing their proliferation. The sequence is that of Keratin, type I cytoskeletal 17 from Pan troglodytes (Chimpanzee).